The following is a 249-amino-acid chain: tRNA (guanine-N(1)-)-methyltransferase (249 aa).

S-adenosyl-L-methionine is bound by residues glycine 113 and 133–138 (IGDFVL).

This sequence belongs to the RNA methyltransferase TrmD family. Homodimer.

It is found in the cytoplasm. It carries out the reaction guanosine(37) in tRNA + S-adenosyl-L-methionine = N(1)-methylguanosine(37) in tRNA + S-adenosyl-L-homocysteine + H(+). In terms of biological role, specifically methylates guanosine-37 in various tRNAs. The chain is tRNA (guanine-N(1)-)-methyltransferase from Photobacterium profundum (strain SS9).